The sequence spans 722 residues: Probable C-mannosyltransferase DPY19L4 (722 aa).

Residues 1–34 are disordered; that stretch reads MAKEEGTSVEPRQRKKQRTSGSQEAKAEKIRRTP. A2 is modified (N-acetylalanine). A compositionally biased stretch (basic and acidic residues) spans 25-34; sequence AKAEKIRRTP. A run of 12 helical transmembrane segments spans residues 51–71, 160–177, 183–201, 246–262, 268–284, 291–307, 313–331, 351–369, 420–440, 465–485, 487–507, and 521–541; these read IVIG…YLSA, VYFY…YVTA, WLMS…WFLI, FCYL…MMVW, VLFL…IFSV, YEVY…GYLL, ALLV…LVKC, FYLL…KMFV, LLPF…QVFF, IIYH…MEGL, FIWT…PELW, and PMLL…LSLW.

It belongs to the dpy-19 family.

The protein localises to the membrane. Probable C-mannosyltransferase that mediates C-mannosylation of tryptophan residues on target proteins. In Mus musculus (Mouse), this protein is Probable C-mannosyltransferase DPY19L4 (Dpy19l4).